We begin with the raw amino-acid sequence, 274 residues long: tRNA uridine(34) hydroxylase (274 aa).

Residues S121–N217 form the Rhodanese domain. The active-site Cysteine persulfide intermediate is C177.

Belongs to the TrhO family.

The enzyme catalyses uridine(34) in tRNA + AH2 + O2 = 5-hydroxyuridine(34) in tRNA + A + H2O. In terms of biological role, catalyzes oxygen-dependent 5-hydroxyuridine (ho5U) modification at position 34 in tRNAs. The chain is tRNA uridine(34) hydroxylase from Ehrlichia canis (strain Jake).